We begin with the raw amino-acid sequence, 229 residues long: Ribosome maturation factor RimM (229 aa).

The tract at residues 1-39 (MAGHDSGSAKRGRSPSFGVFVRKPVERAPTKGAGDGAAD) is disordered. One can recognise a PRC barrel domain in the interval 148 to 229 (ADEFYWVDLI…RIVVDWEADY (82 aa)).

This sequence belongs to the RimM family. As to quaternary structure, binds ribosomal protein uS19.

The protein localises to the cytoplasm. An accessory protein needed during the final step in the assembly of 30S ribosomal subunit, possibly for assembly of the head region. Essential for efficient processing of 16S rRNA. May be needed both before and after RbfA during the maturation of 16S rRNA. It has affinity for free ribosomal 30S subunits but not for 70S ribosomes. This Burkholderia thailandensis (strain ATCC 700388 / DSM 13276 / CCUG 48851 / CIP 106301 / E264) protein is Ribosome maturation factor RimM.